Reading from the N-terminus, the 420-residue chain is Serine palmitoyltransferase (420 aa).

Residues 134–135 (GY), H234, T262, and S264 contribute to the pyridoxal 5'-phosphate site. K265 carries the post-translational modification N6-(pyridoxal phosphate)lysine.

This sequence belongs to the class-II pyridoxal-phosphate-dependent aminotransferase family. In terms of assembly, homodimer. The cofactor is pyridoxal 5'-phosphate.

Its subcellular location is the cytoplasm. It carries out the reaction L-serine + hexadecanoyl-CoA + H(+) = 3-oxosphinganine + CO2 + CoA. The protein operates within lipid metabolism; sphingolipid metabolism. With respect to regulation, not inhibited by relatively high concentrations of palmitoyl-CoA. Inhibited by both D-cycloserine (DCS) and L-cycloserine (LCS), which inactivate SPT by transamination to form a free pyridoxamine 5'-phosphate (PMP) and beta-aminooxyacetaldehyde that remain bound at the active site. Inhibition is reversed by incubation with excess pyridoxal phosphate. Inhibited by the fungal natural product myriocin, which acts as a competitive inhibitor for both L-serine and palmitoyl-CoA substrates. Functionally, catalyzes the condensation of L-serine with palmitoyl-CoA (hexadecanoyl-CoA) to produce 3-oxosphinganine. Exhibits a broad substrate specificity concerning the chain length and the degree of unsaturation of acyl-CoA. This chain is Serine palmitoyltransferase, found in Sphingomonas paucimobilis (Pseudomonas paucimobilis).